Reading from the N-terminus, the 787-residue chain is Protein smoothened (787 aa).

An N-terminal signal peptide occupies residues 1 to 27 (MAAARPARGPELPLLGLLLLLLLGDPG). Topologically, residues 28-233 (RGAASSGNAT…EAEHQDMHSY (206 aa)) are extracellular. The tract at residues 30 to 60 (AASSGNATGPGPRSAGGSARRSAAVTGPPPP) is disordered. An N-linked (GlcNAc...) asparagine glycan is attached at asparagine 35. A compositionally biased stretch (low complexity) spans 38–53 (GPGPRSAGGSARRSAA). 5 disulfide bridges follow: cysteine 64-cysteine 178, cysteine 70-cysteine 134, cysteine 78-cysteine 127, cysteine 118-cysteine 154, and cysteine 147-cysteine 169. Residues 65–181 (GRAAPCEPLR…DRFPEGCTNE (117 aa)) form the FZ domain. Cholesterol is bound at residue aspartate 95. N-linked (GlcNAc...) asparagine glycosylation is present at asparagine 188. Cystine bridges form between cysteine 193/cysteine 213 and cysteine 217/cysteine 295. A helical membrane pass occupies residues 234–254 (IAAFGAVTGLCTLFTLATFVA). Over 255-262 (DWRNSNRY) the chain is Cytoplasmic. Residues 263 to 283 (PAVILFYVNACFFVGSIGWLA) form a helical membrane-spanning segment. Residues 284–314 (QFMDGARREIVCRADGTMRLGEPTSNETLSC) are Extracellular-facing. Asparagine 309 carries an N-linked (GlcNAc...) asparagine glycan. An intrachain disulfide couples cysteine 314 to cysteine 390. The helical transmembrane segment at 315–335 (VIIFVIVYYALMAGVVWFVVL) threads the bilayer. At 336 to 358 (TYAWHTSFKALGTTYQPLSGKTS) the chain is on the cytoplasmic side. Residues 359–379 (YFHLLTWSLPFVLTVAILAVA) traverse the membrane as a helical segment. The Extracellular segment spans residues 380–402 (QVDGDSVSGICFVGYKNYRYRAG). Residue tyrosine 394 coordinates cholesterol. A helical transmembrane segment spans residues 403–423 (FVLAPIGLVLIVGGYFLIRGV). Topologically, residues 424-451 (MTLFSIKSNHPGLLSEKAASKINETMLR) are cytoplasmic. Residues 452–472 (LGIFGFLAFGFVLITFSCHFY) form a helical membrane-spanning segment. The Extracellular segment spans residues 473 to 524 (DFFNQAEWERSFRDYVLCQANVTIGLPTKQPIPDCEIKNRPSLLVEKINLFA). Cysteine 490 and cysteine 507 are joined by a disulfide. The chain crosses the membrane as a helical span at residues 525 to 545 (MFGTGIAMSTWVWTKATLLIW). The segment at 538–569 (TKATLLIWRRTWCRLTGQSDDEPKRIKKSKMI) is interaction with BBS5 and BBS7. Over 546-787 (RRTWCRLTGQ…TELMDADSDF (242 aa)) the chain is Cytoplasmic. A phosphoserine mark is found at serine 556, serine 574, and serine 590. Residues 570–653 (AKAFSKRHEL…TPVPPEEQAN (84 aa)) are required for interaction with PRKACA. The interaction with DLG5 stretch occupies residues 581–593 (QNPGQELSFSMHT). At threonine 593 the chain carries Phosphothreonine. Residues serine 595 and serine 638 each carry the phosphoserine modification. A phosphothreonine mark is found at threonine 640 and threonine 644. A Phosphoserine modification is found at serine 662. The tract at residues 667–704 (KRLGRKKKRRKRKKEVCPLAPPPELHPPAPAPSTIPRL) is disordered. Residues 668-680 (RLGRKKKRRKRKK) show a composition bias toward basic residues. Over residues 685 to 699 (LAPPPELHPPAPAPS) the composition is skewed to pro residues.

Belongs to the G-protein coupled receptor Fz/Smo family. Homodimer. Interacts (via C-terminus) with protein kinase A catalytic subunit PRKACA; interacts with free PRKACA subunits and the interaction leads to sequestration of PRKACA at the membrane, preventing PRKACA-mediated phosphorylation of GLI transcription factors. Interacts with ARRB2. Interacts with KIF7. Interacts with BBS5 and BBS7; the interactions are indicative for the association of SMO with the BBsome complex to facilitate ciliary localization of SMO. Interacts with DLG5 and SDCBP. Interacts with GAS8/DRC4. In terms of processing, phosphorylation by GRK kinases is required for interaction with protein kinase A catalytic subunit PRKACA.

It localises to the cell membrane. It is found in the cell projection. The protein localises to the cilium. G protein-coupled receptor which associates with the patched protein (PTCH) to transduce hedgehog protein signaling. Binding of sonic hedgehog (SHH) to its receptor patched prevents inhibition of smoothened (SMO) by patched. When active, SMO binds to and sequesters protein kinase A catalytic subunit PRKACA at the cell membrane, preventing PRKACA-mediated phosphorylation of GLI transcription factors which releases the GLI proteins from PRKACA-mediated inhibition and allows for transcriptional activation of hedgehog pathway target genes. Required for the accumulation of KIF7, GLI2 and GLI3 in the cilia. Interacts with DLG5 at the ciliary base to induce the accumulation of KIF7 and GLI2 at the ciliary tip for GLI2 activation. This chain is Protein smoothened (SMO), found in Homo sapiens (Human).